The primary structure comprises 438 residues: Enolase (438 aa).

Substrate contacts are provided by H159 and E168. Residue E211 is the Proton donor of the active site. Residues D246, E297, and D322 each contribute to the Mg(2+) site. Substrate contacts are provided by E297 and D322. Residue K347 is the Proton acceptor of the active site. Substrate contacts are provided by residues 374–377 (SHRS) and K398.

It belongs to the enolase family. Homodimer. It depends on Mg(2+) as a cofactor.

It is found in the cytoplasm. It carries out the reaction (2R)-2-phosphoglycerate = phosphoenolpyruvate + H2O. The protein operates within carbohydrate degradation; glycolysis; pyruvate from D-glyceraldehyde 3-phosphate: step 4/5. This chain is Enolase (emp-7), found in Neurospora crassa (strain ATCC 24698 / 74-OR23-1A / CBS 708.71 / DSM 1257 / FGSC 987).